The chain runs to 314 residues: Ribosomal RNA small subunit methyltransferase H (314 aa).

Residues 36-38 (AGH), aspartate 56, phenylalanine 83, aspartate 104, and glutamine 111 contribute to the S-adenosyl-L-methionine site.

Belongs to the methyltransferase superfamily. RsmH family.

It is found in the cytoplasm. The enzyme catalyses cytidine(1402) in 16S rRNA + S-adenosyl-L-methionine = N(4)-methylcytidine(1402) in 16S rRNA + S-adenosyl-L-homocysteine + H(+). In terms of biological role, specifically methylates the N4 position of cytidine in position 1402 (C1402) of 16S rRNA. In Brevibacillus brevis (strain 47 / JCM 6285 / NBRC 100599), this protein is Ribosomal RNA small subunit methyltransferase H.